A 466-amino-acid chain; its full sequence is Argininosuccinate lyase (466 aa).

It belongs to the lyase 1 family. Argininosuccinate lyase subfamily.

It is found in the cytoplasm. It catalyses the reaction 2-(N(omega)-L-arginino)succinate = fumarate + L-arginine. Its pathway is amino-acid biosynthesis; L-arginine biosynthesis; L-arginine from L-ornithine and carbamoyl phosphate: step 3/3. The sequence is that of Argininosuccinate lyase from Bartonella tribocorum (strain CIP 105476 / IBS 506).